The following is a 223-amino-acid chain: Deoxyribose-phosphate aldolase (223 aa).

Asp-91 functions as the Proton donor/acceptor in the catalytic mechanism. Catalysis depends on Lys-153, which acts as the Schiff-base intermediate with acetaldehyde. The Proton donor/acceptor role is filled by Lys-182.

The protein belongs to the DeoC/FbaB aldolase family. DeoC type 1 subfamily.

The protein localises to the cytoplasm. The enzyme catalyses 2-deoxy-D-ribose 5-phosphate = D-glyceraldehyde 3-phosphate + acetaldehyde. It functions in the pathway carbohydrate degradation; 2-deoxy-D-ribose 1-phosphate degradation; D-glyceraldehyde 3-phosphate and acetaldehyde from 2-deoxy-alpha-D-ribose 1-phosphate: step 2/2. Its function is as follows. Catalyzes a reversible aldol reaction between acetaldehyde and D-glyceraldehyde 3-phosphate to generate 2-deoxy-D-ribose 5-phosphate. The polypeptide is Deoxyribose-phosphate aldolase (Yersinia enterocolitica serotype O:8 / biotype 1B (strain NCTC 13174 / 8081)).